Reading from the N-terminus, the 221-residue chain is Max dimerization protein 1 (221 aa).

The Nuclear localization signal motif lies at 21–49 (RREREAEHGYASMLPYNNKDRDALKRRNK). Disordered regions lie at residues 30-68 (YASMLPYNNKDRDALKRRNKSKKNNSSSRSTHNEMEKNR) and 173-204 (TGDLDWSSSSVSDSDERGSMQSLGSDEGYSST). The region spanning 56-108 (SSRSTHNEMEKNRRAHLRLCLEKLKGLVPLGPESSRHTTLSLLTKAKLHIKKL) is the bHLH domain. Positions 175 to 184 (DLDWSSSSVS) are enriched in low complexity. Residues 191–204 (SMQSLGSDEGYSST) are compositionally biased toward polar residues.

As to quaternary structure, heterodimer with MAX; the interaction is required for DNA-binding. DNA binding requires dimerization with another bHLH protein; does not form homodimers, and does not bind to DNA in the absence of MAX in vitro. Interacts with RNF17. Ubiquitinated by BIRC2/c-IAP1, leading to its subsequent degradation by the proteasome.

It is found in the nucleus. In terms of biological role, component of a transcriptional repressor complex together with MAX. In complex with MAX binds to the core DNA sequence 5'-CAC[GA]TG-3'. Antagonizes MYC transcriptional activity by competing with MYC for MAX binding. Binds to the TERT promoter and represses telomerase expression, possibly by interfering with MYC binding. This Homo sapiens (Human) protein is Max dimerization protein 1 (MXD1).